A 395-amino-acid polypeptide reads, in one-letter code: Acid ceramidase (395 aa).

The signal sequence occupies residues 1 to 21 (MLGRSRLALVLLAAAVSCAVA). An intrachain disulfide couples Cys31 to Cys340. Cys143 acts as the Nucleophile in catalysis. 6 N-linked (GlcNAc...) asparagine glycosylation sites follow: Asn173, Asn195, Asn259, Asn286, Asn342, and Asn348. A disulfide bridge links Cys388 with Cys392.

This sequence belongs to the acid ceramidase family. Heterodimer; disulfide-linked. The heterodimer is composed of the disulfide-linked alpha and beta chains produced by autocatalytic cleavage of the precursor. Post-translationally, N-glycosylated. In terms of processing, proteolytically cleaved into two chains alpha and beta that remain associated via a disulfide bond. Cleavage gives rise to a conformation change that activates the enzyme. The same catalytic Cys residue mediates the autoproteolytic cleavage and subsequent hydrolysis of lipid substrates. The beta chain may undergo an additional C-terminal processing.

It is found in the lysosome. It localises to the secreted. The enzyme catalyses an N-acylsphing-4-enine + H2O = sphing-4-enine + a fatty acid. The catalysed reaction is N-dodecanoylsphing-4-enine + H2O = dodecanoate + sphing-4-enine. It carries out the reaction N-tetradecanoylsphing-4-enine + H2O = tetradecanoate + sphing-4-enine. It catalyses the reaction N-hexadecanoylsphing-4-enine + H2O = sphing-4-enine + hexadecanoate. The enzyme catalyses N-octadecanoylsphing-4-enine + H2O = sphing-4-enine + octadecanoate. The catalysed reaction is N-dodecanoyl-(4R)-hydroxysphinganine + H2O = (4R)-hydroxysphinganine + dodecanoate. It carries out the reaction N-(dodecanoyl)-sphinganine + H2O = dodecanoate + sphinganine. It catalyses the reaction N-(acetyl)-sphing-4-enine + H2O = sphing-4-enine + acetate. The enzyme catalyses N-(hexanoyl)sphing-4-enine + H2O = hexanoate + sphing-4-enine. The catalysed reaction is N-octanoylsphing-4-enine + H2O = octanoate + sphing-4-enine. It carries out the reaction N-(9Z-octadecenoyl)-sphing-4-enine + H2O = sphing-4-enine + (9Z)-octadecenoate. It catalyses the reaction N-dodecanoylethanolamine + H2O = dodecanoate + ethanolamine. It participates in lipid metabolism; sphingolipid metabolism. Lysosomal ceramidase that hydrolyzes sphingolipid ceramides into sphingosine and free fatty acids at acidic pH. Ceramides, sphingosine, and its phosphorylated form sphingosine-1-phosphate are bioactive lipids that mediate cellular signaling pathways regulating several biological processes including cell proliferation, apoptosis and differentiation. Has a higher catalytic efficiency towards C12-ceramides versus other ceramides. Also catalyzes the reverse reaction allowing the synthesis of ceramides from fatty acids and sphingosine. For the reverse synthetic reaction, the natural sphingosine D-erythro isomer is more efficiently utilized as a substrate compared to D-erythro-dihydrosphingosine and D-erythro-phytosphingosine, while the fatty acids with chain lengths of 12 or 14 carbons are the most efficiently used. Also has an N-acylethanolamine hydrolase activity. By regulating the levels of ceramides, sphingosine and sphingosine-1-phosphate in the epidermis, mediates the calcium-induced differentiation of epidermal keratinocytes. Also indirectly regulates tumor necrosis factor/TNF-induced apoptosis. By regulating the intracellular balance between ceramides and sphingosine, in adrenocortical cells, probably also acts as a regulator of steroidogenesis. This is Acid ceramidase from Macaca fascicularis (Crab-eating macaque).